The following is a 291-amino-acid chain: Protease HtpX homolog (291 aa).

2 helical membrane-spanning segments follow: residues 11 to 31 (INTF…GLLA) and 34 to 54 (FLGM…ACVQ). Residue H140 participates in Zn(2+) binding. E141 is a catalytic residue. H144 serves as a coordination point for Zn(2+). 2 helical membrane passes run 155–175 (IVFG…RALI) and 186–206 (AFSF…AMLV). E215 contacts Zn(2+).

Belongs to the peptidase M48B family. Zn(2+) is required as a cofactor.

It localises to the cell membrane. The sequence is that of Protease HtpX homolog from Tropheryma whipplei (strain TW08/27) (Whipple's bacillus).